The primary structure comprises 163 residues: Neurotrophin-3 (163 aa).

Positions 1–3 (IQS) are cleaved as a signal peptide. A propeptide spanning residues 4 to 119 (TSMDQGILTE…VLNRTSRRKR (116 aa)) is cleaved from the precursor. N-linked (GlcNAc...) asparagine glycosylation is present at N112. The interval 113-133 (RTSRRKREGKSHRGEYSVCDS) is disordered. A compositionally biased stretch (basic and acidic residues) spans 123–133 (SHRGEYSVCDS).

The protein belongs to the NGF-beta family.

It is found in the secreted. Functionally, seems to promote the survival of visceral and proprioceptive sensory neurons. The polypeptide is Neurotrophin-3 (NTF3) (Charina bottae (Northern rubber boa)).